The following is a 119-amino-acid chain: Flagellar transcriptional regulator FlhD (119 aa).

It belongs to the FlhD family. Homodimer; disulfide-linked. Forms a heterohexamer composed of two FlhC and four FlhD subunits. Each FlhC binds a FlhD dimer, forming a heterotrimer, and a hexamer assembles by dimerization of two heterotrimers.

It localises to the cytoplasm. In terms of biological role, functions in complex with FlhC as a master transcriptional regulator that regulates transcription of several flagellar and non-flagellar operons by binding to their promoter region. Activates expression of class 2 flagellar genes, including fliA, which is a flagellum-specific sigma factor that turns on the class 3 genes. Also regulates genes whose products function in a variety of physiological pathways. This Enterobacter sp. (strain 638) protein is Flagellar transcriptional regulator FlhD.